The sequence spans 174 residues: Granulocyte colony-stimulating factor (174 aa).

Disulfide bonds link cysteine 36/cysteine 42 and cysteine 64/cysteine 74. O-linked (GalNAc...) threonine glycosylation occurs at threonine 133.

It belongs to the IL-6 superfamily. Monomer. Post-translationally, O-glycosylated.

Its subcellular location is the secreted. Functionally, granulocyte/macrophage colony-stimulating factors are cytokines that act in hematopoiesis by controlling the production, differentiation, and function of 2 related white cell populations of the blood, the granulocytes and the monocytes-macrophages. This CSF induces granulocytes. This Ovis aries (Sheep) protein is Granulocyte colony-stimulating factor (CSF3).